The sequence spans 183 residues: ATP-dependent protease subunit HslV (183 aa).

Thr9 is an active-site residue. 3 residues coordinate Na(+): Ala164, Cys167, and Thr170.

Belongs to the peptidase T1B family. HslV subfamily. In terms of assembly, a double ring-shaped homohexamer of HslV is capped on each side by a ring-shaped HslU homohexamer. The assembly of the HslU/HslV complex is dependent on binding of ATP.

The protein localises to the cytoplasm. It catalyses the reaction ATP-dependent cleavage of peptide bonds with broad specificity.. Allosterically activated by HslU binding. Its function is as follows. Protease subunit of a proteasome-like degradation complex believed to be a general protein degrading machinery. The polypeptide is ATP-dependent protease subunit HslV (Hydrogenovibrio crunogenus (strain DSM 25203 / XCL-2) (Thiomicrospira crunogena)).